The chain runs to 378 residues: tRNA (guanine(37)-N(1))-methyltransferase (378 aa).

Residues histidine 196, 234–235 (DL), 262–263 (DA), and asparagine 282 contribute to the S-adenosyl-L-methionine site.

The protein belongs to the class I-like SAM-binding methyltransferase superfamily. TRM5/TYW2 family. In terms of assembly, monomer.

The protein localises to the mitochondrion matrix. It localises to the nucleus. The protein resides in the cytoplasm. It carries out the reaction guanosine(37) in tRNA + S-adenosyl-L-methionine = N(1)-methylguanosine(37) in tRNA + S-adenosyl-L-homocysteine + H(+). Functionally, specifically methylates the N1 position of guanosine-37 in various cytoplasmic and mitochondrial tRNAs. Methylation is not dependent on the nature of the nucleoside 5' of the target nucleoside. This is the first step in the biosynthesis of wybutosine (yW), a modified base adjacent to the anticodon of tRNAs and required for accurate decoding. This is tRNA (guanine(37)-N(1))-methyltransferase from Trichomonas vaginalis (strain ATCC PRA-98 / G3).